We begin with the raw amino-acid sequence, 88 residues long: Beta-insect excitatory toxin LqhIT1d (88 aa).

Positions 1–18 (MKFFLLFLVVLPIMGVLG) are cleaved as a signal peptide. Residues 20 to 83 (KNGFAVDSNG…ISDTRKKLCD (64 aa)) form the LCN-type CS-alpha/beta domain. 4 disulfide bridges follow: Cys34–Cys55, Cys40–Cys60, Cys44–Cys62, and Cys56–Cys82.

It belongs to the long (4 C-C) scorpion toxin superfamily. Sodium channel inhibitor family. Beta subfamily. In terms of tissue distribution, expressed by the venom gland.

The protein resides in the secreted. Its function is as follows. Excitatory insect toxins induce a spastic paralysis. They bind voltage-independently at site-4 of sodium channels (Nav) and shift the voltage of activation toward more negative potentials thereby affecting sodium channel activation and promoting spontaneous and repetitive firing. This is Beta-insect excitatory toxin LqhIT1d from Leiurus hebraeus (Hebrew deathstalker scorpion).